Consider the following 349-residue polypeptide: Ferredoxin--NADP reductase 1 (349 aa).

7 residues coordinate FAD: Glu36, Lys44, Tyr48, Ile88, Leu123, Asp290, and Ser331.

The protein belongs to the ferredoxin--NADP reductase type 2 family. As to quaternary structure, homodimer. The cofactor is FAD.

It carries out the reaction 2 reduced [2Fe-2S]-[ferredoxin] + NADP(+) + H(+) = 2 oxidized [2Fe-2S]-[ferredoxin] + NADPH. The polypeptide is Ferredoxin--NADP reductase 1 (Bacillus mycoides (strain KBAB4) (Bacillus weihenstephanensis)).